Reading from the N-terminus, the 146-residue chain is Phosphoribosyl-AMP cyclohydrolase (146 aa).

Asp95 serves as a coordination point for Mg(2+). Cys96 contacts Zn(2+). 2 residues coordinate Mg(2+): Asp97 and Asp99. 2 residues coordinate Zn(2+): Cys112 and Cys119.

This sequence belongs to the PRA-CH family. Homodimer. Mg(2+) is required as a cofactor. Zn(2+) serves as cofactor.

The protein resides in the cytoplasm. The enzyme catalyses 1-(5-phospho-beta-D-ribosyl)-5'-AMP + H2O = 1-(5-phospho-beta-D-ribosyl)-5-[(5-phospho-beta-D-ribosylamino)methylideneamino]imidazole-4-carboxamide. It functions in the pathway amino-acid biosynthesis; L-histidine biosynthesis; L-histidine from 5-phospho-alpha-D-ribose 1-diphosphate: step 3/9. Catalyzes the hydrolysis of the adenine ring of phosphoribosyl-AMP. The chain is Phosphoribosyl-AMP cyclohydrolase from Chromohalobacter salexigens (strain ATCC BAA-138 / DSM 3043 / CIP 106854 / NCIMB 13768 / 1H11).